We begin with the raw amino-acid sequence, 148 residues long: 3-hydroxyacyl-[acyl-carrier-protein] dehydratase FabZ (148 aa).

Residue histidine 55 is part of the active site.

This sequence belongs to the thioester dehydratase family. FabZ subfamily.

Its subcellular location is the cytoplasm. The enzyme catalyses a (3R)-hydroxyacyl-[ACP] = a (2E)-enoyl-[ACP] + H2O. Involved in unsaturated fatty acids biosynthesis. Catalyzes the dehydration of short chain beta-hydroxyacyl-ACPs and long chain saturated and unsaturated beta-hydroxyacyl-ACPs. This is 3-hydroxyacyl-[acyl-carrier-protein] dehydratase FabZ from Haemophilus influenzae (strain 86-028NP).